Here is a 289-residue protein sequence, read N- to C-terminus: Rhodopsin (289 aa).

Residues 1–7 are Extracellular-facing; it reads YLVSPAA. A helical transmembrane segment spans residues 8-32; sequence YAALGAYMFLLILIGFPVNFLTLYV. Residues 33–44 are Cytoplasmic-facing; the sequence is TLEHKKLRTPLN. Residues 45–67 form a helical membrane-spanning segment; sequence YILLNLAVADLFMVLGGFTTTMY. Residues 68–81 are Extracellular-facing; that stretch reads TSMHGYFVLGRLGC. A disulfide bridge connects residues Cys-81 and Cys-158. Residues 82 to 104 form a helical membrane-spanning segment; it reads NLEGFFATLGGEIALWSLVVLAI. The 'Ionic lock' involved in activated form stabilization signature appears at 105–107; sequence ERW. Over 105-123 the chain is Cytoplasmic; sequence ERWIVVCKPISNFRFTEDN. The chain crosses the membrane as a helical span at residues 124 to 144; sequence AIMGLAFSWVMALTCAVPPLV. At 145–173 the chain is on the extracellular side; it reads GWSRYIPEGMQCSCGVDYYTRAEGFNNES. Asn-171 carries N-linked (GlcNAc...) asparagine glycosylation. A helical membrane pass occupies residues 174-195; the sequence is FVIYMFIVHFPIPLSVIFFCYG. Over 196-223 the chain is Cytoplasmic; sequence RLLCAVKEAAAAQQESETTQRAEKEVSR. Residues 224-245 form a helical membrane-spanning segment; the sequence is MVVILVIGFLVCWLPYASVAWW. Residues 246 to 257 are Extracellular-facing; the sequence is IFCNQGSDFGPI. Residues 258-279 form a helical membrane-spanning segment; sequence FMTLPSFFAKRPAIYNPMIYIC. Lys-267 bears the N6-(retinylidene)lysine mark. Residues 280 to 289 are Cytoplasmic-facing; the sequence is MNKQFRHCMI.

This sequence belongs to the G-protein coupled receptor 1 family. Opsin subfamily. Post-translationally, phosphorylated on some or all of the serine and threonine residues present in the C-terminal region. In terms of processing, contains one covalently linked retinal chromophore.

The protein resides in the membrane. The protein localises to the cell projection. It is found in the cilium. It localises to the photoreceptor outer segment. Functionally, photoreceptor required for image-forming vision at low light intensity. While most salt water fish species use retinal as chromophore, most freshwater fish use 3-dehydroretinal, or a mixture of retinal and 3-dehydroretinal. Light-induced isomerization of 11-cis to all-trans retinal triggers a conformational change that activates signaling via G-proteins. Subsequent receptor phosphorylation mediates displacement of the bound G-protein alpha subunit by arrestin and terminates signaling. In Batrachocottus multiradiatus (Baikal sculpin), this protein is Rhodopsin (rho).